A 261-amino-acid chain; its full sequence is Secreted RxLR effector protein 154 (261 aa).

Residues 1–18 form the signal peptide; sequence MRRCALLFRLFLISYSCS. The RxLR-dEER motif lies at 49–64; sequence RILQADDPEHIRTEER.

It belongs to the RxLR effector family.

It is found in the secreted. The protein localises to the host cell membrane. In terms of biological role, secreted effector that completely suppresses the host cell death induced by cell death-inducing proteins. This Plasmopara viticola (Downy mildew of grapevine) protein is Secreted RxLR effector protein 154.